The chain runs to 339 residues: Ketol-acid reductoisomerase (NADP(+)) (339 aa).

Residues 1 to 182 enclose the KARI N-terminal Rossmann domain; that stretch reads MRVYYDRDAD…GGGRAGIIET (182 aa). NADP(+) contacts are provided by residues 24–27, Arg48, Ser51, Ser53, and 83–86; these read YGSQ and DELQ. His108 is an active-site residue. Gly134 contributes to the NADP(+) binding site. Residues 183-328 enclose the KARI C-terminal knotted domain; that stretch reads TFKEECETDL…ERLRAMMPWI (146 aa). Residues Asp191, Glu195, Glu227, and Glu231 each coordinate Mg(2+). Substrate is bound at residue Ser252.

It belongs to the ketol-acid reductoisomerase family. It depends on Mg(2+) as a cofactor.

It catalyses the reaction (2R)-2,3-dihydroxy-3-methylbutanoate + NADP(+) = (2S)-2-acetolactate + NADPH + H(+). The catalysed reaction is (2R,3R)-2,3-dihydroxy-3-methylpentanoate + NADP(+) = (S)-2-ethyl-2-hydroxy-3-oxobutanoate + NADPH + H(+). It participates in amino-acid biosynthesis; L-isoleucine biosynthesis; L-isoleucine from 2-oxobutanoate: step 2/4. It functions in the pathway amino-acid biosynthesis; L-valine biosynthesis; L-valine from pyruvate: step 2/4. Its function is as follows. Involved in the biosynthesis of branched-chain amino acids (BCAA). Catalyzes an alkyl-migration followed by a ketol-acid reduction of (S)-2-acetolactate (S2AL) to yield (R)-2,3-dihydroxy-isovalerate. In the isomerase reaction, S2AL is rearranged via a Mg-dependent methyl migration to produce 3-hydroxy-3-methyl-2-ketobutyrate (HMKB). In the reductase reaction, this 2-ketoacid undergoes a metal-dependent reduction by NADPH to yield (R)-2,3-dihydroxy-isovalerate. This chain is Ketol-acid reductoisomerase (NADP(+)), found in Methylobacterium nodulans (strain LMG 21967 / CNCM I-2342 / ORS 2060).